Reading from the N-terminus, the 140-residue chain is Putative pre-16S rRNA nuclease (140 aa).

It belongs to the YqgF nuclease family.

It localises to the cytoplasm. Functionally, could be a nuclease involved in processing of the 5'-end of pre-16S rRNA. The polypeptide is Putative pre-16S rRNA nuclease (Yersinia pseudotuberculosis serotype O:1b (strain IP 31758)).